A 508-amino-acid chain; its full sequence is Phenylalanine--tRNA ligase alpha subunit (508 aa).

At A2 the chain carries N-acetylalanine. Residues S193 and S301 each carry the phosphoserine modification. At K311 the chain carries N6-acetyllysine. L-phenylalanine contacts are provided by residues T329, 372–374 (QIE), and Y412. Residue E414 coordinates Mg(2+). F438 is a binding site for L-phenylalanine.

This sequence belongs to the class-II aminoacyl-tRNA synthetase family. Phe-tRNA synthetase alpha subunit type 2 subfamily. In terms of assembly, heterotetramer; dimer of two heterodimers formed by FARSA and FARSB. It depends on Mg(2+) as a cofactor.

It localises to the cytoplasm. It carries out the reaction tRNA(Phe) + L-phenylalanine + ATP = L-phenylalanyl-tRNA(Phe) + AMP + diphosphate + H(+). The polypeptide is Phenylalanine--tRNA ligase alpha subunit (Farsa) (Rattus norvegicus (Rat)).